The chain runs to 149 residues: MQIWVDADACPKVVKEVLFRAATRTGIQLTLVANHYIPVPSAANIRSMQVEAGFDVADDEIVKRSEAGDLVISADIPLAAELIEKKVQVLNPRGELYTEATIKARLNIRDFMDTMRASGIQTGGPAPLSQTERREFANQLDRILAKAKI.

This sequence belongs to the UPF0178 family.

This is UPF0178 protein VF_0601 from Aliivibrio fischeri (strain ATCC 700601 / ES114) (Vibrio fischeri).